Here is a 287-residue protein sequence, read N- to C-terminus: Orotidine 5'-phosphate decarboxylase (287 aa).

The active-site Proton donor is the K97.

The protein belongs to the OMP decarboxylase family. Type 2 subfamily.

The enzyme catalyses orotidine 5'-phosphate + H(+) = UMP + CO2. The protein operates within pyrimidine metabolism; UMP biosynthesis via de novo pathway; UMP from orotate: step 2/2. In Clostridium perfringens (strain SM101 / Type A), this protein is Orotidine 5'-phosphate decarboxylase.